The primary structure comprises 521 residues: Cytochrome P450 1A1 (521 aa).

Substrate is bound at residue F229. C463 contributes to the heme binding site.

The protein belongs to the cytochrome P450 family. The cofactor is heme.

It is found in the endoplasmic reticulum membrane. It localises to the microsome membrane. The catalysed reaction is an organic molecule + reduced [NADPH--hemoprotein reductase] + O2 = an alcohol + oxidized [NADPH--hemoprotein reductase] + H2O + H(+). Functionally, cytochromes P450 are a group of heme-thiolate monooxygenases. They oxidize a variety of structurally unrelated compounds, including steroids, fatty acids, and xenobiotics. The chain is Cytochrome P450 1A1 (cyp1a1) from Limanda limanda (Common dab).